Reading from the N-terminus, the 424-residue chain is Histidinol dehydrogenase (424 aa).

Residues tyrosine 121, glutamine 183, and asparagine 206 each contribute to the NAD(+) site. Substrate contacts are provided by serine 229, glutamine 251, and histidine 254. Glutamine 251 and histidine 254 together coordinate Zn(2+). Residues glutamate 319 and histidine 320 each act as proton acceptor in the active site. Positions 320, 353, 407, and 412 each coordinate substrate. A Zn(2+)-binding site is contributed by aspartate 353. Histidine 412 is a binding site for Zn(2+).

The protein belongs to the histidinol dehydrogenase family. It depends on Zn(2+) as a cofactor.

It catalyses the reaction L-histidinol + 2 NAD(+) + H2O = L-histidine + 2 NADH + 3 H(+). It functions in the pathway amino-acid biosynthesis; L-histidine biosynthesis; L-histidine from 5-phospho-alpha-D-ribose 1-diphosphate: step 9/9. Its function is as follows. Catalyzes the sequential NAD-dependent oxidations of L-histidinol to L-histidinaldehyde and then to L-histidine. The protein is Histidinol dehydrogenase of Geobacillus kaustophilus (strain HTA426).